Consider the following 202-residue polypeptide: 3-isopropylmalate dehydratase small subunit 1 (202 aa).

Belongs to the LeuD family. LeuD type 1 subfamily. Heterodimer of LeuC and LeuD.

The enzyme catalyses (2R,3S)-3-isopropylmalate = (2S)-2-isopropylmalate. Its pathway is amino-acid biosynthesis; L-leucine biosynthesis; L-leucine from 3-methyl-2-oxobutanoate: step 2/4. Its function is as follows. Catalyzes the isomerization between 2-isopropylmalate and 3-isopropylmalate, via the formation of 2-isopropylmaleate. This chain is 3-isopropylmalate dehydratase small subunit 1, found in Mannheimia succiniciproducens (strain KCTC 0769BP / MBEL55E).